The following is a 174-amino-acid chain: FAD synthase (174 aa).

ATP contacts are provided by residues 34-35 (TF), 39-42 (HPGH), Asp119, and Tyr147.

The protein belongs to the archaeal FAD synthase family. Homodimer. A divalent metal cation is required as a cofactor.

The enzyme catalyses FMN + ATP + H(+) = FAD + diphosphate. The protein operates within cofactor biosynthesis; FAD biosynthesis; FAD from FMN: step 1/1. In terms of biological role, catalyzes the transfer of the AMP portion of ATP to flavin mononucleotide (FMN) to produce flavin adenine dinucleotide (FAD) coenzyme. The chain is FAD synthase from Methanococcus voltae (strain ATCC BAA-1334 / A3).